A 258-amino-acid chain; its full sequence is MNTQTTPSPQFYLTAPAACPYLPHEMERKVFTHLVGPRAAEMNDILTQGGFRRSQNIAYRPACESCRACVSVRILAQEFEPTKSMKRVLAANSDVIATEFTAQPSSEQYSLFRRYLDFRHQQGGMSDMTVLDYAIMVEDTHVNTRIVEYRRREEGSGLEQRPTGELLAAALTDTMSDGLSMVYSYFNPDLERRSLGTFMILDHVRRAKALGLPHVYLGYWVQGSRKMDYKTRFQPQEHLTPRGWERFDPSSMPESPHD.

It belongs to the R-transferase family. Bpt subfamily.

The protein localises to the cytoplasm. It catalyses the reaction N-terminal L-glutamyl-[protein] + L-leucyl-tRNA(Leu) = N-terminal L-leucyl-L-glutamyl-[protein] + tRNA(Leu) + H(+). The catalysed reaction is N-terminal L-aspartyl-[protein] + L-leucyl-tRNA(Leu) = N-terminal L-leucyl-L-aspartyl-[protein] + tRNA(Leu) + H(+). Functions in the N-end rule pathway of protein degradation where it conjugates Leu from its aminoacyl-tRNA to the N-termini of proteins containing an N-terminal aspartate or glutamate. In Rhizobium leguminosarum bv. trifolii (strain WSM2304), this protein is Aspartate/glutamate leucyltransferase.